A 235-amino-acid chain; its full sequence is V-type proton ATPase subunit E2 (235 aa).

Methionine 1 carries the post-translational modification N-acetylmethionine. Residues 8 to 64 are a coiled coil; it reads KQIQQMVRFIRQEAEEKANEISISAEEEFNIERLQLLESAKRKLRQDYDRKLKQVDI.

This sequence belongs to the V-ATPase E subunit family. In terms of assembly, V-ATPase is a heteromultimeric enzyme composed of a peripheral catalytic V1 complex (components A to H) attached to an integral membrane V0 proton pore complex (components: a, c, c'', d and e).

It localises to the vacuole membrane. Functionally, subunit of the peripheral V1 complex of vacuolar ATPase essential for assembly or catalytic function. V-ATPase is responsible for acidifying a variety of intracellular compartments in eukaryotic cells. The polypeptide is V-type proton ATPase subunit E2 (VHA-E2) (Arabidopsis thaliana (Mouse-ear cress)).